We begin with the raw amino-acid sequence, 604 residues long: UvrABC system protein C (604 aa).

One can recognise a GIY-YIG domain in the interval 15 to 92 (DLPGCYLMKN…IQKHQPYFNI (78 aa)). The UVR domain maps to 197-232 (ETVKKQLTKRMDQAAADLEFERAAELRDQLNYIEMT).

Belongs to the UvrC family. In terms of assembly, interacts with UvrB in an incision complex.

Its subcellular location is the cytoplasm. Its function is as follows. The UvrABC repair system catalyzes the recognition and processing of DNA lesions. UvrC both incises the 5' and 3' sides of the lesion. The N-terminal half is responsible for the 3' incision and the C-terminal half is responsible for the 5' incision. The protein is UvrABC system protein C of Lactiplantibacillus plantarum (strain ATCC BAA-793 / NCIMB 8826 / WCFS1) (Lactobacillus plantarum).